The chain runs to 82 residues: RNA-binding protein GK0100 (82 aa).

This sequence belongs to the eukaryotic ribosomal protein eL8 family.

This chain is RNA-binding protein GK0100, found in Geobacillus kaustophilus (strain HTA426).